Here is a 443-residue protein sequence, read N- to C-terminus: Glycerol-3-phosphate acyltransferase 3-like (443 aa).

Transmembrane regions (helical) follow at residues 15 to 35, 146 to 166, and 170 to 190; these read WFSCVIVLIMLPAMFGISLGI, ISLRLTVLWVVGVVVRYCILL, and ITLTTIGLTWLVIGTTTVGFL. The HXXXXD motif signature appears at 238-243; that stretch reads HTSPID. Residues 358–378 traverse the membrane as a helical segment; sequence IMSYLLRMMTSWAIVCNVWYL.

The protein belongs to the 1-acyl-sn-glycerol-3-phosphate acyltransferase family.

Its subcellular location is the endoplasmic reticulum membrane. It carries out the reaction sn-glycerol 3-phosphate + an acyl-CoA = a 1-acyl-sn-glycero-3-phosphate + CoA. The catalysed reaction is a 1-acyl-sn-glycero-3-phosphate + an acyl-CoA = a 1,2-diacyl-sn-glycero-3-phosphate + CoA. The protein operates within glycerolipid metabolism; triacylglycerol biosynthesis. It functions in the pathway phospholipid metabolism; CDP-diacylglycerol biosynthesis; CDP-diacylglycerol from sn-glycerol 3-phosphate: step 1/3. Its function is as follows. May transfer the acyl-group from acyl-coA to the sn-1 position of glycerol-3-phosphate, an essential step in glycerolipid biosynthesis. Also transfers the acyl-group from acyl-coA to the sn-2 position of 1-acyl-sn-glycerol-3-phosphate (lysophosphatidic acid, or LPA), forming 1,2-diacyl-sn-glycerol-3-phosphate (phosphatidic acid, or PA). This is Glycerol-3-phosphate acyltransferase 3-like (agpat9l) from Danio rerio (Zebrafish).